The primary structure comprises 372 residues: NAD(P)H-quinone oxidoreductase subunit 1 (372 aa).

Helical transmembrane passes span 27 to 47 (AIWMPLPMILMLIGATVGVLV), 65 to 85 (PEYIGPLGLLAPVADGLKLVF), 97 to 117 (WLFTLGPILVVLPVFLSYLIV), 128 to 148 (VGTGIFLWIALSSIQPIGLLM), 166 to 186 (AAQSISYEIPLALSVLAIVMM), 204 to 224 (ILGWNIWRQPLGFMIFWIAAL), 266 to 286 (ILSALLVAVLYLGGWDFPIPI), 308 to 328 (ALGITMTLVKAYFLVFIAILL), and 347 to 367 (FLLPVGLVNLLLTAALKLAFP).

Belongs to the complex I subunit 1 family. NDH-1 is composed of at least 11 different subunits.

Its subcellular location is the cellular thylakoid membrane. The catalysed reaction is a plastoquinone + NADH + (n+1) H(+)(in) = a plastoquinol + NAD(+) + n H(+)(out). The enzyme catalyses a plastoquinone + NADPH + (n+1) H(+)(in) = a plastoquinol + NADP(+) + n H(+)(out). NDH-1 shuttles electrons from an unknown electron donor, via FMN and iron-sulfur (Fe-S) centers, to quinones in the respiratory and/or the photosynthetic chain. The immediate electron acceptor for the enzyme in this species is believed to be plastoquinone. Couples the redox reaction to proton translocation, and thus conserves the redox energy in a proton gradient. This chain is NAD(P)H-quinone oxidoreductase subunit 1, found in Nostoc sp. (strain PCC 7120 / SAG 25.82 / UTEX 2576).